Here is a 586-residue protein sequence, read N- to C-terminus: 25S rRNA (adenine-N(1))-methyltransferase (586 aa).

Disordered stretches follow at residues 23 to 229 (GTAP…LTPL) and 536 to 573 (GKCV…EVKD). Residues 25–41 (APAAPAPASAPAVSSSK) are compositionally biased toward low complexity. Positions 65 to 83 (LWEKVIEQKKEGVADGVKK) are enriched in basic and acidic residues. Polar residues predominate over residues 99–108 (KLSNSNNDGN). Basic residues predominate over residues 114 to 123 (NNKKKNKNKN). The segment covering 144 to 163 (GEEDEDDNNDDADEWEGIDE) has biased composition (acidic residues). A compositionally biased stretch (basic and acidic residues) spans 164-182 (DEKHASSEKPTPKKDDKKQ). Positions 183–192 (QQLQQQQQQK) are enriched in low complexity. The span at 204–213 (NGTTSNWQQD) shows a compositional bias: polar residues. Residues 217–229 (PKTATPAPKLTPL) show a composition bias toward low complexity. Positions 539–549 (VPKDGQEDTTK) are enriched in basic and acidic residues. Over residues 550–559 (NKKGGQKPKP) the composition is skewed to basic residues.

It belongs to the methyltransferase superfamily. RRP8 family.

The protein localises to the nucleus. It is found in the nucleolus. S-adenosyl-L-methionine-dependent methyltransferase that specifically methylates the N(1) position of a conserved adenine in helix 25.1 in 25S rRNA. Required both for ribosomal 40S and 60S subunits biogenesis. Required for efficient pre-rRNA cleavage at site A2. The sequence is that of 25S rRNA (adenine-N(1))-methyltransferase (RPR8) from Chaetomium thermophilum (strain DSM 1495 / CBS 144.50 / IMI 039719) (Thermochaetoides thermophila).